Consider the following 187-residue polypeptide: Peptide deformylase (187 aa).

Residues Cys-107 and His-149 each contribute to the Fe cation site. The active site involves Glu-150. His-153 provides a ligand contact to Fe cation.

Belongs to the polypeptide deformylase family. The cofactor is Fe(2+).

The enzyme catalyses N-terminal N-formyl-L-methionyl-[peptide] + H2O = N-terminal L-methionyl-[peptide] + formate. In terms of biological role, removes the formyl group from the N-terminal Met of newly synthesized proteins. Requires at least a dipeptide for an efficient rate of reaction. N-terminal L-methionine is a prerequisite for activity but the enzyme has broad specificity at other positions. The chain is Peptide deformylase from Synechocystis sp. (strain ATCC 27184 / PCC 6803 / Kazusa).